A 46-amino-acid chain; its full sequence is U-limacoditoxin(6)-Dv61 (46 aa).

The N-terminal stretch at 1–19 (MSKLLVLLMTTALATLAQA) is a signal peptide.

This sequence belongs to the limacoditoxin-6 family. As to expression, expressed by the venom secretory cell of the spine. The spine is a cuticular structure containing a single large nucleated venom-secreting cell at its base. It is an independent unit capable of producing, storing and injecting venom. On the back of D.vulnerans caterpillars, spines are grouped together by 50 to 100 to form scoli, of which there are eight in D.vulnerans.

It localises to the secreted. In terms of biological role, probable toxin. Does not show insecticidal, antimicrobial and antiparasitic activities. Does not induce increase in intracellular calcium in mouse DRG neurons, suggesting that it does not induce pain. The sequence is that of U-limacoditoxin(6)-Dv61 from Doratifera vulnerans (Mottled cup moth).